A 78-amino-acid chain; its full sequence is WAP four-disulfide core domain protein 12 (78 aa).

Residues 1 to 21 form the signal peptide; sequence MWPNSILVLTVLLISSTLVTG. In terms of domain architecture, WAP spans 25 to 72; sequence KGAEKGVCPPDNVRCIRGEDPQCHNDNDCKDQKICCYWHCGFKCVQPV. Intrachain disulfides connect cysteine 32/cysteine 60, cysteine 39/cysteine 64, cysteine 47/cysteine 59, and cysteine 53/cysteine 68.

It is found in the secreted. Its function is as follows. Antibacterial protein. Putative acid-stable proteinase inhibitor. The protein is WAP four-disulfide core domain protein 12 of Rattus norvegicus (Rat).